A 374-amino-acid polypeptide reads, in one-letter code: Methylthioribose-1-phosphate isomerase (374 aa).

Residue D256 is the Proton donor of the active site.

The protein belongs to the eIF-2B alpha/beta/delta subunits family. MtnA subfamily.

Its subcellular location is the cytoplasm. It localises to the nucleus. The enzyme catalyses 5-(methylsulfanyl)-alpha-D-ribose 1-phosphate = 5-(methylsulfanyl)-D-ribulose 1-phosphate. The protein operates within amino-acid biosynthesis; L-methionine biosynthesis via salvage pathway; L-methionine from S-methyl-5-thio-alpha-D-ribose 1-phosphate: step 1/6. Catalyzes the interconversion of methylthioribose-1-phosphate (MTR-1-P) into methylthioribulose-1-phosphate (MTRu-1-P). The protein is Methylthioribose-1-phosphate isomerase of Leishmania braziliensis.